Consider the following 1194-residue polypeptide: ATP-dependent RNA helicase DHX30 (1194 aa).

Basic and acidic residues predominate over residues 1–10 (MFTLDSFRKD). The disordered stretch occupies residues 1–27 (MFTLDSFRKDRTQHRQRQCKLPPPRLP). Serine 6 is subject to Phosphoserine. One can recognise a DRBM domain in the interval 53-121 (PKNLLNSVIG…QAAAAACQLF (69 aa)). The tract at residues 153–200 (WWRPEPTMPPTSWRQLNPENIRPAGTGGLSRSLGREEEEDEEEELEEG) is disordered. Residues 188 to 200 (EEEEDEEEELEEG) are compositionally biased toward acidic residues. 2 positions are modified to phosphoserine: serine 226 and serine 380. The Helicase ATP-binding domain occupies 444–612 (LSAIEQHPVV…FGGCPVIKVP (169 aa)). 457-464 (GDTGCGKT) lines the ATP pocket. The DEAH box motif lies at 559-562 (DEVH). The Helicase C-terminal domain occupies 654-827 (LVTDLVLHID…NLVLQAKIHM (174 aa)).

Belongs to the DEAD box helicase family. DEAH subfamily. As to quaternary structure, identified in a complex with TFAM and SSBP1. Interacts (via N-terminus) with ZC3HAV1 (via N-terminal domain) in an RNA-independent manner. Found in a complex with GRSF1, DDX28, FASTKD2 and FASTKD5.

It is found in the cytoplasm. The protein localises to the mitochondrion. Its subcellular location is the mitochondrion matrix. The protein resides in the mitochondrion nucleoid. It carries out the reaction ATP + H2O = ADP + phosphate + H(+). Its function is as follows. RNA-dependent helicase. Plays an important role in the assembly of the mitochondrial large ribosomal subunit. Associates with mitochondrial DNA. Required for optimal function of the zinc-finger antiviral protein ZC3HAV1. Involved in nervous system development and differentiation through its involvement in the up-regulation of a number of genes which are required for neurogenesis, including GSC, NCAM1, neurogenin, and NEUROD. This Rattus norvegicus (Rat) protein is ATP-dependent RNA helicase DHX30 (Dhx30).